A 207-amino-acid polypeptide reads, in one-letter code: Ribosomal RNA small subunit methyltransferase G (207 aa).

S-adenosyl-L-methionine is bound by residues G77, F82, 100–102, and R141; that span reads ERS.

It belongs to the methyltransferase superfamily. RNA methyltransferase RsmG family.

Its subcellular location is the cytoplasm. Functionally, specifically methylates the N7 position of a guanine in 16S rRNA. This chain is Ribosomal RNA small subunit methyltransferase G, found in Borrelia hermsii (strain HS1 / DAH).